The primary structure comprises 961 residues: DNA replication licensing factor MCM2 (961 aa).

Over residues 1–17 (MDDSENNAPSTPGSPGF) the composition is skewed to polar residues. Disordered regions lie at residues 1–81 (MDDS…FNDN) and 120–220 (AEAE…EEDE). Positions 39–78 (SDDDDDDVVGAEEAEVDPNVLPEDDGVVAAEEEEDGEDLF) are enriched in acidic residues. 2 stretches are compositionally biased toward basic and acidic residues: residues 120–146 (AEAE…LHDQ) and 166–176 (PPREPRTPRSD). A compositionally biased stretch (acidic residues) spans 205 to 220 (QTDDDPYEDEFDEEDE). The segment at 380–406 (CSKCGTVLGPFFQNSYTEVKVGSCPEC) adopts a C4-type zinc-finger fold. The MCM domain occupies 524 to 730 (IGERIVKSIA…FTDEMLARFV (207 aa)). 574 to 581 (GDPGTAKS) serves as a coordination point for ATP. The Arginine finger motif lies at 706–709 (SRFD).

Belongs to the MCM family. As to quaternary structure, component of the minichromosome maintenance (MCM) complex, a heterotetramer composed of MCM2, MCM3, MCM4, MCM5, MCM6 and MCM7.

Its subcellular location is the nucleus. The enzyme catalyses ATP + H2O = ADP + phosphate + H(+). Its function is as follows. Probable component of the MCM2-7 complex (MCM complex) that may function as a DNA helicase and which is essential to undergo a single round of replication initiation and elongation per cell cycle in eukaryotic cells. This Oryza sativa subsp. indica (Rice) protein is DNA replication licensing factor MCM2.